The primary structure comprises 500 residues: L-aspartate semialdehyde sulfurtransferase (500 aa).

C131 serves as the catalytic Cysteine persulfide intermediate. 2 consecutive CBS domains span residues 384–441 and 446–500; these read MADF…IFDS and MTKK…ARRY.

The protein belongs to the L-aspartate semialdehyde sulfurtransferase family. As to quaternary structure, forms homodimers. May form a complex with MA_1822.

The catalysed reaction is L-aspartate 4-semialdehyde + reduced 2[4Fe-4S]-[ferredoxin] + hydrogen sulfide + 3 H(+) = oxidized 2[4Fe-4S]-[ferredoxin] + L-homocysteine + H2O. Its pathway is amino-acid biosynthesis. Its function is as follows. Required for O-acetylhomoserine sulfhydrylase (OAHS)-independent homocysteine (Hcy) biosynthesis. Together with MA_1822, catalyzes the condensation of sulfide with aspartate semialdehyde to generate homocysteine. Likely functions through persulfide intermediate. The chain is L-aspartate semialdehyde sulfurtransferase from Methanosarcina acetivorans (strain ATCC 35395 / DSM 2834 / JCM 12185 / C2A).